The chain runs to 91 residues: MAIKKFSSLLLPLLMVLALVVLPIISGRTQEHPCQDYRLGCKSRDVCNAKCLSLGYVKGGDCVTFAFPICCCKINFGFQDDSPISSPIFTD.

The N-terminal stretch at 1 to 27 (MAIKKFSSLLLPLLMVLALVVLPIISG) is a signal peptide. 4 disulfides stabilise this stretch: C34/C72, C41/C62, C47/C70, and C51/C71.

It belongs to the DEFL family.

The protein localises to the secreted. This Arabidopsis thaliana (Mouse-ear cress) protein is Defensin-like protein 82.